A 695-amino-acid chain; its full sequence is Scarecrow-like protein 31 (695 aa).

Disordered stretches follow at residues 105 to 136 and 234 to 260; these read VISD…NSSN and ISKT…RSKQ. Residues 113 to 136 are compositionally biased toward low complexity; it reads SSIPNNSITTSSSSNSGDYSNSSN. A coiled-coil region spans residues 233 to 266; that stretch reads AISKTRKNHHEREEEEDDLEEARRRSKQFAVNEE. Residues 306 to 693 enclose the GRAS domain; it reads AKKKSRAVDF…RILFSSSCWV (388 aa). Residues 313 to 377 are leucine repeat I (LRI); that stretch reads VDFRTLLTLC…EGSTGTMIQS (65 aa). Positions 396 to 461 are VHIID; sequence YSVFLSASPF…PGLRKLRITG (66 aa). A VHIID motif is present at residues 427–431; that stretch reads LHIVD. A leucine repeat II (LRII) region spans residues 477–509; it reads DTGRRLTEYCKRFGVPFEYNAIASKNWETIKME. The PFYRE stretch occupies residues 519–614; the sequence is LAVNAVLRFK…GEFYGREVMN (96 aa). The interval 617–693 is SAW; it reads ACEGVDRVER…RILFSSSCWV (77 aa).

The protein belongs to the GRAS family. As to expression, expressed in seedlings, roots, cotyledons, leaves and sepals.

It localises to the nucleus. Its function is as follows. Probable transcription factor involved in plant development. This is Scarecrow-like protein 31 (SCL31) from Arabidopsis thaliana (Mouse-ear cress).